Reading from the N-terminus, the 96-residue chain is MKKVIVALGVLAFANVLMATDVKALVKGCAACHGVKFEKKALGKSKIVNMMSEKEIEEDLMAFKSGANKNPVMTAQAKKLSDEDIKALAKYIPTLK.

The N-terminal stretch at 1 to 19 (MKKVIVALGVLAFANVLMA) is a signal peptide. Heme c contacts are provided by cysteine 29, cysteine 32, histidine 33, and methionine 73.

It belongs to the cytochrome c family. Post-translationally, binds 1 heme c group covalently per subunit.

It localises to the periplasm. Natural electron acceptor for a formate dehydrogenase. This chain is Cytochrome c-553, found in Helicobacter pylori (strain J99 / ATCC 700824) (Campylobacter pylori J99).